The primary structure comprises 404 residues: Nicotinate phosphoribosyltransferase (404 aa).

His-224 bears the Phosphohistidine; by autocatalysis mark.

This sequence belongs to the NAPRTase family. Transiently phosphorylated on a His residue during the reaction cycle. Phosphorylation strongly increases the affinity for substrates and increases the rate of nicotinate D-ribonucleotide production. Dephosphorylation regenerates the low-affinity form of the enzyme, leading to product release.

It carries out the reaction nicotinate + 5-phospho-alpha-D-ribose 1-diphosphate + ATP + H2O = nicotinate beta-D-ribonucleotide + ADP + phosphate + diphosphate. Its pathway is cofactor biosynthesis; NAD(+) biosynthesis; nicotinate D-ribonucleotide from nicotinate: step 1/1. Functionally, catalyzes the synthesis of beta-nicotinate D-ribonucleotide from nicotinate and 5-phospho-D-ribose 1-phosphate at the expense of ATP. The chain is Nicotinate phosphoribosyltransferase from Proteus mirabilis (strain HI4320).